A 380-amino-acid chain; its full sequence is Nucleoporin Nup43 (380 aa).

Position 1 is an N-acetylmethionine (Met-1). 6 WD repeats span residues 8-57 (FVSQ…NLDS), 72-110 (RHHG…QTLS), 127-166 (PSYS…AVRT), 170-208 (ADSS…NEPS), 215-255 (GDRV…MPVS), and 259-299 (AHEA…PEKS).

In terms of assembly, component of the Nup107-160 subcomplex of the nuclear pore complex (NPC). The Nup107-160 subcomplex includes NUP160, NUP133, NUP107, NUP98, NUP85, NUP43, NUP37, SEH1 and SEC13.

It localises to the chromosome. The protein localises to the centromere. The protein resides in the kinetochore. Its subcellular location is the nucleus. It is found in the nuclear pore complex. In terms of biological role, component of the Nup107-160 subcomplex of the nuclear pore complex (NPC). The Nup107-160 subcomplex is required for the assembly of a functional NPC. The Nup107-160 subcomplex is also required for normal kinetochore microtubule attachment, mitotic progression and chromosome segregation. The protein is Nucleoporin Nup43 (NUP43) of Homo sapiens (Human).